The following is a 944-amino-acid chain: Putative alpha,alpha-trehalose-phosphate synthase [UDP-forming] 106 kDa subunit (944 aa).

Positions 73–84 (TNAQSNIATPSP) are enriched in polar residues. Disordered regions lie at residues 73-113 (TNAQ…NSLS) and 129-166 (SKND…SELE). Over residues 101-113 (PSSDSPSLENSLS) the composition is skewed to low complexity. Phosphoserine is present on residues Ser-141, Ser-145, Ser-149, Ser-150, Ser-163, and Ser-177. The glycosyltransferase stretch occupies residues 173 to 652 (SRSLSFSMNG…AVTFQSLIKE (480 aa)). Thr-189 carries the phosphothreonine modification.

This sequence in the N-terminal section; belongs to the glycosyltransferase 20 family.

It catalyses the reaction D-glucose 6-phosphate + UDP-alpha-D-glucose = alpha,alpha-trehalose 6-phosphate + UDP + H(+). The sequence is that of Putative alpha,alpha-trehalose-phosphate synthase [UDP-forming] 106 kDa subunit from Schizosaccharomyces pombe (strain 972 / ATCC 24843) (Fission yeast).